Here is a 241-residue protein sequence, read N- to C-terminus: Thiamine import ATP-binding protein ThiQ (241 aa).

Residues 2–239 enclose the ABC transporter domain; it reads IQLDKLNHCY…PKDEVLIQYL (238 aa). 41 to 48 is an ATP binding site; sequence GPSGAGKS.

Belongs to the ABC transporter superfamily. Thiamine importer (TC 3.A.1.19.1) family. As to quaternary structure, the complex is composed of two ATP-binding proteins (ThiQ), two transmembrane proteins (ThiP) and a solute-binding protein (ThiB).

Its subcellular location is the cell inner membrane. It catalyses the reaction thiamine(out) + ATP + H2O = thiamine(in) + ADP + phosphate + H(+). Part of the ABC transporter complex ThiBPQ involved in thiamine import. Responsible for energy coupling to the transport system. The polypeptide is Thiamine import ATP-binding protein ThiQ (Photobacterium profundum (strain SS9)).